Consider the following 461-residue polypeptide: NADP-specific glutamate dehydrogenase (461 aa).

K115 is an active-site residue.

Belongs to the Glu/Leu/Phe/Val dehydrogenases family. In terms of assembly, homohexamer.

It carries out the reaction L-glutamate + NADP(+) + H2O = 2-oxoglutarate + NH4(+) + NADPH + H(+). The protein is NADP-specific glutamate dehydrogenase (GDH) of Penicillium chrysogenum (Penicillium notatum).